The chain runs to 373 residues: Probable jasmonic acid carboxyl methyltransferase 1 (373 aa).

Tyr18 serves as a coordination point for S-adenosyl-L-homocysteine. Jasmonate is bound at residue Gln25. S-adenosyl-L-homocysteine contacts are provided by Cys59, Asn64, Asp96, Leu97, Ser135, and Phe136. Residues His156 and Trp157 each coordinate jasmonate. Residues Asn174, Asp260, Phe262, and Asn263 each contribute to the Mg(2+) site.

The protein belongs to the methyltransferase superfamily. Type-7 methyltransferase family. Mg(2+) serves as cofactor.

The protein resides in the cytoplasm. It localises to the nucleus. It catalyses the reaction jasmonate + S-adenosyl-L-methionine = methyl (-)-jasmonate + S-adenosyl-L-homocysteine. The protein operates within lipid metabolism; oxylipin biosynthesis. Functionally, catalyzes the methylation of jasmonate into methyljasmonate, a plant volatile that acts as an important cellular regulator mediating diverse developmental processes and defense responses. The chain is Probable jasmonic acid carboxyl methyltransferase 1 from Theobroma cacao (Cacao).